The following is a 499-amino-acid chain: Cytosol aminopeptidase (499 aa).

Mn(2+) is bound by residues K267 and D272. K279 is an active-site residue. Residues D290, D349, and E351 each contribute to the Mn(2+) site. R353 is a catalytic residue.

Belongs to the peptidase M17 family. The cofactor is Mn(2+).

Its subcellular location is the cytoplasm. It catalyses the reaction Release of an N-terminal amino acid, Xaa-|-Yaa-, in which Xaa is preferably Leu, but may be other amino acids including Pro although not Arg or Lys, and Yaa may be Pro. Amino acid amides and methyl esters are also readily hydrolyzed, but rates on arylamides are exceedingly low.. The enzyme catalyses Release of an N-terminal amino acid, preferentially leucine, but not glutamic or aspartic acids.. Its function is as follows. Presumably involved in the processing and regular turnover of intracellular proteins. Catalyzes the removal of unsubstituted N-terminal amino acids from various peptides. In Buchnera aphidicola subsp. Acyrthosiphon pisum (strain APS) (Acyrthosiphon pisum symbiotic bacterium), this protein is Cytosol aminopeptidase (pepA).